The sequence spans 23 residues: Unknown protein NF005 from 2D-PAGE (23 aa).

Positions 1–23 (AGKARKQLSKNEDTKLKEQYIXD) are disordered. Basic and acidic residues predominate over residues 9–23 (SKNEDTKLKEQYIXD).

This chain is Unknown protein NF005 from 2D-PAGE, found in Naegleria fowleri (Brain eating amoeba).